Reading from the N-terminus, the 295-residue chain is uncharacterized protein (295 aa).

The N-terminal stretch at 1-26 (MKKYLALAAIVAICALWLTQNSNFEA) is a signal peptide.

This is an uncharacterized protein from Archaeoglobus fulgidus (strain ATCC 49558 / DSM 4304 / JCM 9628 / NBRC 100126 / VC-16).